The sequence spans 341 residues: Acetylpolyamine amidohydrolase (341 aa).

The active-site Proton donor/acceptor is the His157. 3 residues coordinate Zn(2+): Asp192, His194, and Asp281.

The protein belongs to the histone deacetylase family. In terms of assembly, homodimer. Zn(2+) is required as a cofactor.

It catalyses the reaction N-acetylputrescine + H2O = putrescine + acetate. The enzyme catalyses N-acetylcadaverine + H2O = cadaverine + acetate. It functions in the pathway amine and polyamine metabolism. Functionally, involved in polyamine metabolism. Catalyzes the deacetylation of various acetylated polyamines such as N-acetylputrescine and N-acetylcadaverine. This is Acetylpolyamine amidohydrolase from Burkholderia pseudomallei (strain 1710b).